The primary structure comprises 448 residues: Adenylosuccinate synthetase (448 aa).

Residues Gly22 to Lys28 and Gly50 to Thr52 contribute to the GTP site. The Proton acceptor role is filled by Asp23. Mg(2+) is bound by residues Asp23 and Gly50. Residues Asp23 to Lys26, Asn48 to His51, Thr139, Arg153, Gln234, Thr249, and Arg321 each bind IMP. His51 acts as the Proton donor in catalysis. Ser317 to Arg323 contacts substrate. GTP contacts are provided by residues Arg323, Lys349–Asp351, and Ser431–Gly433.

Belongs to the adenylosuccinate synthetase family. As to quaternary structure, homodimer. Mg(2+) serves as cofactor.

The protein localises to the cytoplasm. It catalyses the reaction IMP + L-aspartate + GTP = N(6)-(1,2-dicarboxyethyl)-AMP + GDP + phosphate + 2 H(+). It participates in purine metabolism; AMP biosynthesis via de novo pathway; AMP from IMP: step 1/2. Functionally, plays an important role in the de novo pathway of purine nucleotide biosynthesis. Catalyzes the first committed step in the biosynthesis of AMP from IMP. The protein is Adenylosuccinate synthetase of Paraburkholderia xenovorans (strain LB400).